The following is a 126-amino-acid chain: Protein ApaG (126 aa).

Positions 2–126 (SDPRYQVDVS…FRLAVPGALH (125 aa)) constitute an ApaG domain.

This Pseudomonas fluorescens (strain Pf0-1) protein is Protein ApaG.